We begin with the raw amino-acid sequence, 177 residues long: Large ribosomal subunit protein uL6 (177 aa).

It belongs to the universal ribosomal protein uL6 family. Part of the 50S ribosomal subunit.

Its function is as follows. This protein binds to the 23S rRNA, and is important in its secondary structure. It is located near the subunit interface in the base of the L7/L12 stalk, and near the tRNA binding site of the peptidyltransferase center. This chain is Large ribosomal subunit protein uL6, found in Vibrio parahaemolyticus serotype O3:K6 (strain RIMD 2210633).